Consider the following 346-residue polypeptide: UDP-N-acetylenolpyruvoylglucosamine reductase (346 aa).

The FAD-binding PCMH-type domain occupies 18–189 (LRAQARAFIA…VSVVFALKTH (172 aa)). Residue Arg165 is part of the active site. Ser240 acts as the Proton donor in catalysis. Glu336 is a catalytic residue.

This sequence belongs to the MurB family. The cofactor is FAD.

It is found in the cytoplasm. It catalyses the reaction UDP-N-acetyl-alpha-D-muramate + NADP(+) = UDP-N-acetyl-3-O-(1-carboxyvinyl)-alpha-D-glucosamine + NADPH + H(+). Its pathway is cell wall biogenesis; peptidoglycan biosynthesis. Its function is as follows. Cell wall formation. The polypeptide is UDP-N-acetylenolpyruvoylglucosamine reductase (Neisseria meningitidis serogroup B (strain ATCC BAA-335 / MC58)).